We begin with the raw amino-acid sequence, 122 residues long: Flagellar protein FliT (122 aa).

The tract at residues 1–50 (MTSTVEFINRWQRIALLSQSLLELAQRGEWELLLQQEVSYLQSIETVMEK) is required for homodimerization. The fliD binding stretch occupies residues 60-98 (IQDMVAGYIKQTLDNEQRLKGLLQQRLDELSGLIGQSTR).

Belongs to the FliT family. Homodimer. Interacts with FliD and FlhC.

The protein localises to the cytoplasm. Its subcellular location is the cytosol. In terms of biological role, dual-function protein that regulates the transcription of class 2 flagellar operons and that also acts as an export chaperone for the filament-capping protein FliD. As a transcriptional regulator, acts as an anti-FlhDC factor; it directly binds FlhC, thus inhibiting the binding of the FlhC/FlhD complex to class 2 promoters, resulting in decreased expression of class 2 flagellar operons. As a chaperone, effects FliD transition to the membrane by preventing its premature polymerization, and by directing it to the export apparatus. This chain is Flagellar protein FliT, found in Salmonella arizonae (strain ATCC BAA-731 / CDC346-86 / RSK2980).